Here is a 358-residue protein sequence, read N- to C-terminus: tRNA pseudouridine synthase B (358 aa).

Residues Met-1–Val-50 are disordered. Asp-87 functions as the Nucleophile in the catalytic mechanism.

It belongs to the pseudouridine synthase TruB family. Type 1 subfamily.

The catalysed reaction is uridine(55) in tRNA = pseudouridine(55) in tRNA. Responsible for synthesis of pseudouridine from uracil-55 in the psi GC loop of transfer RNAs. This chain is tRNA pseudouridine synthase B, found in Nitrobacter winogradskyi (strain ATCC 25391 / DSM 10237 / CIP 104748 / NCIMB 11846 / Nb-255).